An 829-amino-acid polypeptide reads, in one-letter code: Spindle-defective protein 2 (829 aa).

4 disordered regions span residues 1 to 29, 41 to 104, 183 to 294, and 326 to 471; these read MNED…DGES, EDED…SNDI, KKDV…TTSD, and RKKR…NGHM. Residues 54–82 show a composition bias toward basic and acidic residues; that stretch reads FRLENRYKPSLHTPRELPTIREENREDVR. Residues 83–93 are compositionally biased toward polar residues; sequence SNTSSRVNTRP. Basic and acidic residues predominate over residues 183-216; the sequence is KKDVTRKQENVRPGKMMPEKVNDENEPKSRRFSP. Composition is skewed to polar residues over residues 217–230 and 266–294; these read ERNT…NSTK and PQRT…TTSD. Positions 314-332 form a coiled coil; sequence VDINLLTALENARKKRDRP. Composition is skewed to low complexity over residues 361–370 and 384–408; these read SMTSIVSSST and NSAT…RVST. Composition is skewed to polar residues over residues 409–439 and 448–463; these read AKND…NSMT and SVSS…STMT.

It localises to the cytoplasm. Its subcellular location is the cytoskeleton. It is found in the microtubule organizing center. The protein localises to the centrosome. The protein resides in the centriole. In terms of biological role, required both for centrosome duplication and maturation. Required for pericentriolar material (PCM) recruitment. This Caenorhabditis briggsae protein is Spindle-defective protein 2.